A 79-amino-acid chain; its full sequence is MAEFKEQVLDILEEVCENDIVKENLDVQLFEEGILDSFAVVSLLVEFQERLEIEVSISDFDRDEWATPNMVIKKLEEIR.

The Carrier domain occupies 2-79 (AEFKEQVLDI…MVIKKLEEIR (78 aa)). Ser37 is modified (O-(pantetheine 4'-phosphoryl)serine).

The protein belongs to the DltC family. In terms of processing, 4'-phosphopantetheine is transferred from CoA to a specific serine of apo-DCP.

It is found in the cytoplasm. It participates in cell wall biogenesis; lipoteichoic acid biosynthesis. Carrier protein involved in the D-alanylation of lipoteichoic acid (LTA). The loading of thioester-linked D-alanine onto DltC is catalyzed by D-alanine--D-alanyl carrier protein ligase DltA. The DltC-carried D-alanyl group is further transferred to cell membrane phosphatidylglycerol (PG) by forming an ester bond, probably catalyzed by DltD. D-alanylation of LTA plays an important role in modulating the properties of the cell wall in Gram-positive bacteria, influencing the net charge of the cell wall. In Bacillus mycoides (strain KBAB4) (Bacillus weihenstephanensis), this protein is D-alanyl carrier protein.